Reading from the N-terminus, the 507-residue chain is Cobyric acid synthase (507 aa).

A GATase cobBQ-type domain is found at 259–456 (EIQIAVIKLP…LHGIFDNGTW (198 aa)). The active-site Nucleophile is the C340. Residue H448 is part of the active site.

This sequence belongs to the CobB/CobQ family. CobQ subfamily.

Its pathway is cofactor biosynthesis; adenosylcobalamin biosynthesis. Functionally, catalyzes amidations at positions B, D, E, and G on adenosylcobyrinic A,C-diamide. NH(2) groups are provided by glutamine, and one molecule of ATP is hydrogenolyzed for each amidation. The chain is Cobyric acid synthase from Prochlorococcus marinus (strain SARG / CCMP1375 / SS120).